A 1233-amino-acid polypeptide reads, in one-letter code: Structural maintenance of chromosomes protein 1A (1233 aa).

32–39 contributes to the ATP binding site; it reads GPNGSGKS. Coiled coils occupy residues 104 to 124 and 163 to 503; these read EYKI…LEKL and ELAQ…KAEI. Residues 284 to 293 are compositionally biased toward basic and acidic residues; that stretch reads IKEKDSELNQ. Disordered stretches follow at residues 284 to 308 and 348 to 369; these read IKEK…TSHK and QEFE…TLEE. A phosphoserine mark is found at Ser358 and Ser360. The SMC hinge domain maps to 515–629; that stretch reads VYGRLIDLCQ…DNVEDARRIA (115 aa). Lys648 and Lys713 each carry N6-acetyllysine. Residues 660-935 are a coiled coil; it reads KAKARRWDEK…RHNLLQACKM (276 aa). The interval 947–966 is disordered; sequence MDDISQEEGSSQGEDSVSGS. Residues 953–966 are compositionally biased toward low complexity; it reads EEGSSQGEDSVSGS. Ser957 carries the phosphoserine; by ATM modification. A Phosphoserine modification is found at Ser962. A Phosphoserine; by ATM and ATR modification is found at Ser966. Ser970 bears the Phosphoserine mark. Residues 991–1068 are a coiled coil; sequence KDAQAEEEIK…FEQIKKERFD (78 aa). At Lys1037 the chain carries N6-acetyllysine.

Belongs to the SMC family. SMC1 subfamily. Forms a heterodimer with SMC3 in cohesin complexes. Cohesin complexes are composed of the SMC1 (SMC1A or SMC1B) and SMC3 heterodimer attached via their SMC hinge domain, RAD21 which link them, and one STAG protein (STAG1, STAG2 or STAG3), which interacts with RAD21. In germ cell cohesin complexes, SMC1A is mutually exclusive with SMC1B. Interacts with BRCA1. Found in a complex with CDCA5, SMC3 and RAD21, PDS5A/SCC-112 and PDS5B/APRIN. Interacts with NDC80. Interacts with BRAT1. Found in a complex containing POLE and SMC3. Interacts with RPGR, STAG3 and SYCP2. The cohesin complex interacts with the cohesin loading complex subunits NIPBL/Scc2 (via HEAT repeats) and MAU2/Scc4. NIPBL directly contacts all members of the complex, RAD21, SMC1A/B, SMC3 and STAG1. Post-translationally, ubiquitinated by the DCX(DCAF15) complex, leading to its degradation. In terms of processing, phosphorylated by ATM upon ionizing radiation in a NBS1-dependent manner. Phosphorylated by ATR upon DNA methylation in a MSH2/MSH6-dependent manner. Phosphorylation of Ser-957 and Ser-966 activates it and is required for S-phase checkpoint activation.

It localises to the nucleus. The protein resides in the chromosome. Its subcellular location is the centromere. It is found in the kinetochore. In terms of biological role, involved in chromosome cohesion during cell cycle and in DNA repair. Central component of cohesin complex. The cohesin complex is required for the cohesion of sister chromatids after DNA replication. The cohesin complex apparently forms a large proteinaceous ring within which sister chromatids can be trapped. At anaphase, the complex is cleaved and dissociates from chromatin, allowing sister chromatids to segregate. The cohesin complex may also play a role in spindle pole assembly during mitosis. Involved in DNA repair via its interaction with BRCA1 and its related phosphorylation by ATM, or via its phosphorylation by ATR. Works as a downstream effector both in the ATM/NBS1 branch and in the ATR/MSH2 branch of S-phase checkpoint. The polypeptide is Structural maintenance of chromosomes protein 1A (SMC1A) (Homo sapiens (Human)).